Here is a 35-residue protein sequence, read N- to C-terminus: Mu-theraphotoxin-Hd1a (35 aa).

3 disulfide bridges follow: Cys2–Cys17, Cys9–Cys24, and Cys16–Cys31.

This sequence belongs to the neurotoxin 10 (Hwtx-1) family. 22 (Htx-4) subfamily. In terms of tissue distribution, expressed by the venom gland.

It is found in the secreted. Its function is as follows. Gating-modifier toxin that reversibly and voltage-independently inhibits human Nav1.1/SCN1A and Nav1.7/SCN9A (IC(50)=111 nM). It also shows moderate inhibition on Nav1.2/SCN2A (1 uM inhibits current by 55%), Nav1.6/SCN8A (31%), Nav1.3/SCN5A (27%) and Nav1.4/SCN4A (23%). This toxin inhibits Nav1.7/SCN9A by interacting with the S3b-S4 paddle motif in channel domain II. In Cyriopagopus doriae (Tarantula spider), this protein is Mu-theraphotoxin-Hd1a.